Reading from the N-terminus, the 349-residue chain is S-adenosylmethionine:tRNA ribosyltransferase-isomerase (349 aa).

It belongs to the QueA family. Monomer.

It is found in the cytoplasm. It catalyses the reaction 7-aminomethyl-7-carbaguanosine(34) in tRNA + S-adenosyl-L-methionine = epoxyqueuosine(34) in tRNA + adenine + L-methionine + 2 H(+). Its pathway is tRNA modification; tRNA-queuosine biosynthesis. In terms of biological role, transfers and isomerizes the ribose moiety from AdoMet to the 7-aminomethyl group of 7-deazaguanine (preQ1-tRNA) to give epoxyqueuosine (oQ-tRNA). The protein is S-adenosylmethionine:tRNA ribosyltransferase-isomerase of Pseudomonas putida (strain GB-1).